The following is a 150-amino-acid chain: SsrA-binding protein (150 aa).

This sequence belongs to the SmpB family.

It localises to the cytoplasm. Functionally, required for rescue of stalled ribosomes mediated by trans-translation. Binds to transfer-messenger RNA (tmRNA), required for stable association of tmRNA with ribosomes. tmRNA and SmpB together mimic tRNA shape, replacing the anticodon stem-loop with SmpB. tmRNA is encoded by the ssrA gene; the 2 termini fold to resemble tRNA(Ala) and it encodes a 'tag peptide', a short internal open reading frame. During trans-translation Ala-aminoacylated tmRNA acts like a tRNA, entering the A-site of stalled ribosomes, displacing the stalled mRNA. The ribosome then switches to translate the ORF on the tmRNA; the nascent peptide is terminated with the 'tag peptide' encoded by the tmRNA and targeted for degradation. The ribosome is freed to recommence translation, which seems to be the essential function of trans-translation. This is SsrA-binding protein from Nitratiruptor sp. (strain SB155-2).